Here is a 45-residue protein sequence, read N- to C-terminus: Endo-1,4-beta-xylanase Xyn10A (45 aa).

The protein belongs to the glycosyl hydrolase 10 (cellulase F) family.

The protein resides in the secreted. The protein localises to the extracellular space. It carries out the reaction Endohydrolysis of (1-&gt;4)-beta-D-xylosidic linkages in xylans.. The enzyme catalyses Endohydrolysis of (1-&gt;4)-beta-D-glucosidic linkages in cellulose, lichenin and cereal beta-D-glucans.. It functions in the pathway glycan degradation; xylan degradation. Has xylanase, avicelase and cellobiohydrolase activity. This chain is Endo-1,4-beta-xylanase Xyn10A, found in Gloeophyllum trabeum (Brown rot fungus).